The following is a 664-amino-acid chain: Methionine--tRNA ligase (664 aa).

A 'HIGH' region motif is present at residues 13–23 (PYTNGPCHLGH). C144, C147, C156, and C160 together coordinate Zn(2+). The 'KMSKS' region signature appears at 327-331 (KFSKS). K330 serves as a coordination point for ATP. The tRNA-binding domain maps to 566–664 (EFAKVEMKTG…TPVPSGTKIR (99 aa)).

The protein belongs to the class-I aminoacyl-tRNA synthetase family. MetG type 1 subfamily. As to quaternary structure, homodimer. Requires Zn(2+) as cofactor.

It is found in the cytoplasm. It carries out the reaction tRNA(Met) + L-methionine + ATP = L-methionyl-tRNA(Met) + AMP + diphosphate. Is required not only for elongation of protein synthesis but also for the initiation of all mRNA translation through initiator tRNA(fMet) aminoacylation. This Methanospirillum hungatei JF-1 (strain ATCC 27890 / DSM 864 / NBRC 100397 / JF-1) protein is Methionine--tRNA ligase.